Reading from the N-terminus, the 103-residue chain is Pyrimidine/purine nucleoside phosphorylase (103 aa).

Belongs to the nucleoside phosphorylase PpnP family.

It carries out the reaction a purine D-ribonucleoside + phosphate = a purine nucleobase + alpha-D-ribose 1-phosphate. The enzyme catalyses adenosine + phosphate = alpha-D-ribose 1-phosphate + adenine. The catalysed reaction is cytidine + phosphate = cytosine + alpha-D-ribose 1-phosphate. It catalyses the reaction guanosine + phosphate = alpha-D-ribose 1-phosphate + guanine. It carries out the reaction inosine + phosphate = alpha-D-ribose 1-phosphate + hypoxanthine. The enzyme catalyses thymidine + phosphate = 2-deoxy-alpha-D-ribose 1-phosphate + thymine. The catalysed reaction is uridine + phosphate = alpha-D-ribose 1-phosphate + uracil. It catalyses the reaction xanthosine + phosphate = alpha-D-ribose 1-phosphate + xanthine. Catalyzes the phosphorolysis of diverse nucleosides, yielding D-ribose 1-phosphate and the respective free bases. Can use uridine, adenosine, guanosine, cytidine, thymidine, inosine and xanthosine as substrates. Also catalyzes the reverse reactions. In Sulfurimonas denitrificans (strain ATCC 33889 / DSM 1251) (Thiomicrospira denitrificans (strain ATCC 33889 / DSM 1251)), this protein is Pyrimidine/purine nucleoside phosphorylase.